We begin with the raw amino-acid sequence, 430 residues long: Enolase (430 aa).

A (2R)-2-phosphoglycerate-binding site is contributed by Q165. E207 (proton donor) is an active-site residue. Residues D244, E287, and D314 each contribute to the Mg(2+) site. (2R)-2-phosphoglycerate-binding residues include K339, R368, S369, and K390. K339 (proton acceptor) is an active-site residue.

Belongs to the enolase family. Component of the RNA degradosome, a multiprotein complex involved in RNA processing and mRNA degradation. Requires Mg(2+) as cofactor.

Its subcellular location is the cytoplasm. The protein resides in the secreted. It is found in the cell surface. It catalyses the reaction (2R)-2-phosphoglycerate = phosphoenolpyruvate + H2O. It participates in carbohydrate degradation; glycolysis; pyruvate from D-glyceraldehyde 3-phosphate: step 4/5. In terms of biological role, catalyzes the reversible conversion of 2-phosphoglycerate (2-PG) into phosphoenolpyruvate (PEP). It is essential for the degradation of carbohydrates via glycolysis. This Xanthomonas oryzae pv. oryzae (strain MAFF 311018) protein is Enolase.